A 452-amino-acid chain; its full sequence is Cobyrinate a,c-diamide synthase (452 aa).

The 194-residue stretch at 248–441 (RVAYALDAAF…LHIHFYQNLA (194 aa)) folds into the GATase cobBQ-type domain. Cys-330 (nucleophile) is an active-site residue.

This sequence belongs to the CobB/CbiA family. Mg(2+) serves as cofactor.

The enzyme catalyses cob(II)yrinate + 2 L-glutamine + 2 ATP + 2 H2O = cob(II)yrinate a,c diamide + 2 L-glutamate + 2 ADP + 2 phosphate + 2 H(+). Its pathway is cofactor biosynthesis; adenosylcobalamin biosynthesis; cob(II)yrinate a,c-diamide from sirohydrochlorin (anaerobic route): step 10/10. Functionally, catalyzes the ATP-dependent amidation of the two carboxylate groups at positions a and c of cobyrinate, using either L-glutamine or ammonia as the nitrogen source. The sequence is that of Cobyrinate a,c-diamide synthase from Listeria monocytogenes serovar 1/2a (strain ATCC BAA-679 / EGD-e).